A 378-amino-acid polypeptide reads, in one-letter code: Tetraacyldisaccharide 4'-kinase (378 aa).

Position 63–70 (63–70) interacts with ATP; it reads AVGGAGKT.

The protein belongs to the LpxK family.

It catalyses the reaction a lipid A disaccharide + ATP = a lipid IVA + ADP + H(+). It functions in the pathway glycolipid biosynthesis; lipid IV(A) biosynthesis; lipid IV(A) from (3R)-3-hydroxytetradecanoyl-[acyl-carrier-protein] and UDP-N-acetyl-alpha-D-glucosamine: step 6/6. Functionally, transfers the gamma-phosphate of ATP to the 4'-position of a tetraacyldisaccharide 1-phosphate intermediate (termed DS-1-P) to form tetraacyldisaccharide 1,4'-bis-phosphate (lipid IVA). The sequence is that of Tetraacyldisaccharide 4'-kinase from Anaeromyxobacter sp. (strain K).